A 142-amino-acid polypeptide reads, in one-letter code: Ribosome-binding factor A (142 aa).

Belongs to the RbfA family. As to quaternary structure, monomer. Binds 30S ribosomal subunits, but not 50S ribosomal subunits or 70S ribosomes.

The protein resides in the cytoplasm. Functionally, one of several proteins that assist in the late maturation steps of the functional core of the 30S ribosomal subunit. Associates with free 30S ribosomal subunits (but not with 30S subunits that are part of 70S ribosomes or polysomes). Required for efficient processing of 16S rRNA. May interact with the 5'-terminal helix region of 16S rRNA. This is Ribosome-binding factor A from Leifsonia xyli subsp. xyli (strain CTCB07).